The following is a 232-amino-acid chain: Aspartate/glutamate leucyltransferase (232 aa).

The protein belongs to the R-transferase family. Bpt subfamily.

Its subcellular location is the cytoplasm. It catalyses the reaction N-terminal L-glutamyl-[protein] + L-leucyl-tRNA(Leu) = N-terminal L-leucyl-L-glutamyl-[protein] + tRNA(Leu) + H(+). The catalysed reaction is N-terminal L-aspartyl-[protein] + L-leucyl-tRNA(Leu) = N-terminal L-leucyl-L-aspartyl-[protein] + tRNA(Leu) + H(+). Its function is as follows. Functions in the N-end rule pathway of protein degradation where it conjugates Leu from its aminoacyl-tRNA to the N-termini of proteins containing an N-terminal aspartate or glutamate. The chain is Aspartate/glutamate leucyltransferase from Vibrio vulnificus (strain YJ016).